A 612-amino-acid chain; its full sequence is Threonine--tRNA ligase (612 aa).

The segment at 218-509 is catalytic; sequence DHRKLGVELG…LSEHFGGNFP (292 aa). Residues C310, H361, and H486 each coordinate Zn(2+).

It belongs to the class-II aminoacyl-tRNA synthetase family. In terms of assembly, homodimer. It depends on Zn(2+) as a cofactor.

The protein resides in the cytoplasm. It carries out the reaction tRNA(Thr) + L-threonine + ATP = L-threonyl-tRNA(Thr) + AMP + diphosphate + H(+). Its function is as follows. Catalyzes the attachment of threonine to tRNA(Thr) in a two-step reaction: L-threonine is first activated by ATP to form Thr-AMP and then transferred to the acceptor end of tRNA(Thr). Also edits incorrectly charged L-seryl-tRNA(Thr). This Helicobacter pylori (strain J99 / ATCC 700824) (Campylobacter pylori J99) protein is Threonine--tRNA ligase.